The sequence spans 300 residues: Protein p34 (300 aa).

5 consecutive transmembrane segments (helical) span residues 14–34 (YLSV…WVVT), 39–59 (ILAS…NLVA), 87–107 (SIFF…SLFI), 119–139 (IIMY…TYVI), and 170–190 (LSDY…LYIF).

The protein belongs to the cation diffusion facilitator (CDF) transporter (TC 2.A.4) family.

The protein resides in the cell membrane. In Rickettsia prowazekii (strain Madrid E), this protein is Protein p34 (p34).